The chain runs to 562 residues: MNAMKRGLCCVLLLCGAVFALPSQEIHARVRRGARSYQVICRDEKTQMIYQQHQSWLRPVLRSNRVEYCWCNSGRAQCHSVPVRSCSEPRCFNGGTCQQALYFSDFVCQCPEGFAGKCCEIDTRATCYEDQGISYRGTWSTAESGAECTNWNSSALAQKPYSGRRPDAIRLGLGNHNYCRNPDRDSKPWCYVFKAGKYSSEFCSTPACSEGNSDCYFGNGLAYRGTHSLTESGASCLLWNSMILIGKVYTAQNPNAQALGLGKHNYCRNPDGDAKPWCHVLKNRRLTWEYCDVPSCSTCGLRQYSQPQFRIKGGLFADIASHPWQAAIFARHRRSPGERFLCGGILISSCWILSAAHCFQERFPPHHLTVILGRTYRVVPGEEEQKFEVEKYIVHKEFDDDTYDNDIALLQLKSDSSRCAQESSVVRTVCLPPADLQLPDWTECELSGYGKHEALSPFYSERLKEAHVRLYPSSRCTSQHLLNRTVADNMLCAGDTRSGGPQANLHDACQGDSGGPLVCLNDGRMTLVGIISWGLGCGEKDVPGVYTKVTNYLDWIHDNMRP.

A signal peptide spans 1 to 20; sequence MNAMKRGLCCVLLLCGAVFA. Positions 21–32 are excised as a propeptide; it reads LPSQEIHARVRR. The propeptide at 33-35 is removed by plasmin; it reads GAR. The Fibronectin type-I domain occupies 39–81; it reads VICRDEKTQMIYQQHQSWLRPVLRSNRVEYCWCNSGRAQCHSV. 17 disulfides stabilise this stretch: Cys-41-Cys-71, Cys-69-Cys-78, Cys-86-Cys-97, Cys-91-Cys-108, Cys-110-Cys-119, Cys-127-Cys-208, Cys-148-Cys-190, Cys-179-Cys-203, Cys-215-Cys-296, Cys-236-Cys-278, Cys-267-Cys-291, Cys-299-Cys-430, Cys-342-Cys-358, Cys-350-Cys-419, Cys-444-Cys-519, Cys-476-Cys-492, and Cys-509-Cys-537. An important for binding to annexin A2 region spans residues 42-52; sequence RDEKTQMIYQQ. An EGF-like domain is found at 82–120; the sequence is PVRSCSEPRCFNGGTCQQALYFSDFVCQCPEGFAGKCCE. Residue Thr-96 is glycosylated (O-linked (Fuc) threonine). Kringle domains are found at residues 126 to 208 and 214 to 296; these read TCYE…TPAC and DCYF…VPSC. Asn-152 is a glycosylation site (N-linked (GlcNAc...) asparagine). The Peptidase S1 domain occupies 311 to 561; that stretch reads IKGGLFADIA…YLDWIHDNMR (251 aa). Active-site charge relay system residues include His-357 and Asp-406. Asn-483 carries an N-linked (GlcNAc...) asparagine glycan. The active-site Charge relay system is the Ser-513.

This sequence belongs to the peptidase S1 family. As to quaternary structure, heterodimer of chain A and chain B held by a disulfide bond. Binds to fibrin with high affinity. This interaction leads to an increase in the catalytic efficiency of the enzyme due to an increase in affinity for plasminogen. Similarly, binding to heparin increases the activation of plasminogen. Binds to annexin A2, cytokeratin-8, fibronectin and laminin. Binds to mannose receptor and the low-density lipoprotein receptor-related protein (LRP1); these proteins are involved in TPA clearance. Binds LRP1B; binding is followed by internalization and degradation. Forms heterodimer with SERPINA5. Interacts with SERPINE1. In complex with SERPINE1, interacts with SORL1. In terms of processing, the single chain, almost fully active enzyme, can be further processed into a two-chain fully active form by a cleavage after Arg-310 catalyzed by plasmin, tissue kallikrein or factor Xa.

The protein resides in the secreted. It localises to the extracellular space. The enzyme catalyses Specific cleavage of Arg-|-Val bond in plasminogen to form plasmin.. With respect to regulation, inhibited by SERPINA5. Inhibited by SERPINE1. In terms of biological role, converts the abundant, but inactive, zymogen plasminogen to plasmin by hydrolyzing a single Arg-Val bond in plasminogen. By controlling plasmin-mediated proteolysis, it plays an important role in tissue remodeling and degradation, in cell migration and many other physiopathological events. During oocyte activation, plays a role in cortical granule reaction in the zona reaction, which contributes to the block to polyspermy. This chain is Tissue-type plasminogen activator (PLAT), found in Pongo abelii (Sumatran orangutan).